Reading from the N-terminus, the 151-residue chain is MTRAGFTALDDELKTLKTVERPAVIRSIAEAREHGDLSENAEYHAAREKQSFIEGRIKELEAILSLAEVIDPAKLSGSIKFGATVTILDEETEEERTYQIVGEAEADIEAGLLNIKSPLARALIGKDEGDSIEVKTPGGERGYEVVSVRFV.

Residues 41-62 are a coiled coil; sequence AEYHAAREKQSFIEGRIKELEA.

The protein belongs to the GreA/GreB family.

Functionally, necessary for efficient RNA polymerase transcription elongation past template-encoded arresting sites. The arresting sites in DNA have the property of trapping a certain fraction of elongating RNA polymerases that pass through, resulting in locked ternary complexes. Cleavage of the nascent transcript by cleavage factors such as GreA or GreB allows the resumption of elongation from the new 3'terminus. GreA releases sequences of 2 to 3 nucleotides. The sequence is that of Transcription elongation factor GreA from Cereibacter sphaeroides (strain ATCC 17023 / DSM 158 / JCM 6121 / CCUG 31486 / LMG 2827 / NBRC 12203 / NCIMB 8253 / ATH 2.4.1.) (Rhodobacter sphaeroides).